The following is a 428-amino-acid chain: Enolase (428 aa).

Q162 is a (2R)-2-phosphoglycerate binding site. Catalysis depends on E204, which acts as the Proton donor. Residues D241, E286, and D313 each contribute to the Mg(2+) site. (2R)-2-phosphoglycerate-binding residues include K338, R367, S368, and K389. K338 functions as the Proton acceptor in the catalytic mechanism.

The protein belongs to the enolase family. Component of the RNA degradosome, a multiprotein complex involved in RNA processing and mRNA degradation. Requires Mg(2+) as cofactor.

The protein localises to the cytoplasm. The protein resides in the secreted. It is found in the cell surface. The enzyme catalyses (2R)-2-phosphoglycerate = phosphoenolpyruvate + H2O. The protein operates within carbohydrate degradation; glycolysis; pyruvate from D-glyceraldehyde 3-phosphate: step 4/5. Catalyzes the reversible conversion of 2-phosphoglycerate (2-PG) into phosphoenolpyruvate (PEP). It is essential for the degradation of carbohydrates via glycolysis. The chain is Enolase from Vesicomyosocius okutanii subsp. Calyptogena okutanii (strain HA).